The sequence spans 231 residues: Somatolactin (231 aa).

A signal peptide spans 1 to 24 (MLMFTAIQRGVWVALLWPHLLTAS). 3 disulfides stabilise this stretch: Cys29–Cys39, Cys89–Cys205, and Cys222–Cys230. N-linked (GlcNAc...) asparagine glycosylation is found at Asn35 and Asn145.

The protein belongs to the somatotropin/prolactin family. As to expression, pituitary gland.

It is found in the secreted. This chain is Somatolactin, found in Siganus guttatus (Orange-spotted spinefoot).